A 264-amino-acid chain; its full sequence is 3-methyl-2-oxobutanoate hydroxymethyltransferase (264 aa).

Mg(2+)-binding residues include D45 and D84. 3-methyl-2-oxobutanoate-binding positions include 45-46 (DS), D84, and K112. A Mg(2+)-binding site is contributed by E114. E181 (proton acceptor) is an active-site residue.

The protein belongs to the PanB family. In terms of assembly, homodecamer; pentamer of dimers. Mg(2+) is required as a cofactor.

It is found in the cytoplasm. It carries out the reaction 3-methyl-2-oxobutanoate + (6R)-5,10-methylene-5,6,7,8-tetrahydrofolate + H2O = 2-dehydropantoate + (6S)-5,6,7,8-tetrahydrofolate. It participates in cofactor biosynthesis; (R)-pantothenate biosynthesis; (R)-pantoate from 3-methyl-2-oxobutanoate: step 1/2. Catalyzes the reversible reaction in which hydroxymethyl group from 5,10-methylenetetrahydrofolate is transferred onto alpha-ketoisovalerate to form ketopantoate. The protein is 3-methyl-2-oxobutanoate hydroxymethyltransferase of Shewanella sp. (strain MR-7).